The primary structure comprises 183 residues: Microfibrillar-associated protein 2 (183 aa).

Positions 1–16 (MRAACLFLLFMPGLLA) form a signal peptide, or 18. Gln-17 bears the Pyrrolidone carboxylic acid mark. 3 positions are modified to sulfotyrosine: Tyr-46, Tyr-47, and Tyr-49. The tract at residues 52 to 92 (VSPRTPEEQFQSQQQVQQEVIPAPTPEPAAAGDLETEPTEP) is disordered. The segment covering 59 to 70 (EQFQSQQQVQQE) has biased composition (low complexity). The ShKT domain maps to 153-183 (CRDKFSKCGVMAVSGLCQSVAASCARSCGGC). 3 disulfide bridges follow: Cys-153–Cys-183, Cys-160–Cys-176, and Cys-169–Cys-180.

Belongs to the MFAP family. As to quaternary structure, forms a ternary complex with BGN and ELN. Interacts with FBN1 (via N-terminal domain) and FBN2. In terms of processing, forms intermolecular disulfide bonds either with other MAGP-1 molecules or with other components of the microfibrils. May form transglutaminase cross-links. Post-translationally, O-glycosylated.

Its subcellular location is the secreted. It localises to the extracellular space. It is found in the extracellular matrix. Functionally, component of the elastin-associated microfibrils. The sequence is that of Microfibrillar-associated protein 2 (Mfap2) from Mus musculus (Mouse).